We begin with the raw amino-acid sequence, 435 residues long: MLPDFITVPSTSEKCLSPELLLPNMDENLEDSKPSSLKYQKAMMSRGTCPSNCKVCRHSATGYHYDVPSCNGCKTFFRRSILDGRKYTCLKMRKCLSGTEPVDLSRRMCRACRFEKCVEAGMNPSAIQADMKTTDGELLRKEIMIKQKTAVDFLNTPQVIMSFEDKVQGIIGKLTVMELKIEPLYTGGLPPGNRDIRKLDELIDAPLILSYDEIPNLKYCPSVDELTGEIKPSGACYIHCGYLASIEYSKMFDFAHKIDVASKATLIKHATIMCADIMTAFFSYYQRKSDRLIHPNGMFAGPPKYRYGEAGTKYQASMQRTLATVLRHELNRIEYMLLKAIVLCNPAVSSLSISVQQIIGKEREEYVRTLLTYCLLNYGSVHGPSRFSALLAIMSVLESQQKNAKDFHLLAKATILKDAVRYTRISNLYEQIMES.

The segment at residues Pro-50–Ala-129 is a DNA-binding region (nuclear receptor). NR C4-type zinc fingers lie at residues Cys-53 to Cys-73 and Cys-89 to Cys-112. The 237-residue stretch at Arg-194 to Glu-430 folds into the NR LBD domain.

The protein belongs to the nuclear hormone receptor family.

The protein localises to the nucleus. In terms of biological role, orphan nuclear receptor. This Caenorhabditis elegans protein is Nuclear hormone receptor family member nhr-136 (nhr-136).